Consider the following 368-residue polypeptide: UPF0284 protein Cyan7425_0342 (368 aa).

Belongs to the UPF0284 family.

This Cyanothece sp. (strain PCC 7425 / ATCC 29141) protein is UPF0284 protein Cyan7425_0342.